The sequence spans 272 residues: Shikimate dehydrogenase (NADP(+)) (272 aa).

Residues 14–16 (SKS) and Thr-61 each bind shikimate. The Proton acceptor role is filled by Lys-65. Glu-77 lines the NADP(+) pocket. The shikimate site is built by Asn-86 and Asp-102. NADP(+) is bound by residues 126 to 130 (GAGGA), 149 to 154 (NRTVSR), and Met-213. Residue Tyr-215 coordinates shikimate. NADP(+) is bound at residue Gly-237.

It belongs to the shikimate dehydrogenase family. In terms of assembly, homodimer.

It catalyses the reaction shikimate + NADP(+) = 3-dehydroshikimate + NADPH + H(+). It participates in metabolic intermediate biosynthesis; chorismate biosynthesis; chorismate from D-erythrose 4-phosphate and phosphoenolpyruvate: step 4/7. Involved in the biosynthesis of the chorismate, which leads to the biosynthesis of aromatic amino acids. Catalyzes the reversible NADPH linked reduction of 3-dehydroshikimate (DHSA) to yield shikimate (SA). In Escherichia coli O81 (strain ED1a), this protein is Shikimate dehydrogenase (NADP(+)).